The primary structure comprises 121 residues: Large ribosomal subunit protein uL18 (121 aa).

This sequence belongs to the universal ribosomal protein uL18 family. As to quaternary structure, part of the 50S ribosomal subunit; part of the 5S rRNA/L5/L18/L25 subcomplex. Contacts the 5S and 23S rRNAs.

This is one of the proteins that bind and probably mediate the attachment of the 5S RNA into the large ribosomal subunit, where it forms part of the central protuberance. This Delftia acidovorans (strain DSM 14801 / SPH-1) protein is Large ribosomal subunit protein uL18.